We begin with the raw amino-acid sequence, 880 residues long: Translation initiation factor IF-2 (880 aa).

Basic and acidic residues-rich tracts occupy residues 34–43 (HMSSLDDKQV), 59–69 (TEKDSKNSSRK), 82–94 (RRRD…DNRH), 110–131 (NRRE…DLLN), 167–181 (KKVE…EKLE), 230–240 (QKEETKPTRKK), and 248–261 (EVPD…EHSD). The disordered stretch occupies residues 34-297 (HMSSLDDKQV…KERPLPETLV (264 aa)). A compositionally biased stretch (basic residues) spans 262–275 (KARRRRNKKNKRIN). The span at 276–292 (QSKEVKKQPTQRKERPL) shows a compositional bias: basic and acidic residues. Residues 381–550 (KRPPVVTIMG…LLQADVMELK (170 aa)) form the tr-type G domain. A G1 region spans residues 390-397 (GHVDHGKT). 390 to 397 (GHVDHGKT) contacts GTP. Residues 415–419 (GITQR) are G2. The interval 436 to 439 (DTPG) is G3. Residues 436-440 (DTPGH) and 490-493 (NKID) contribute to the GTP site. The G4 stretch occupies residues 490–493 (NKID). Residues 526–528 (SAK) are G5.

This sequence belongs to the TRAFAC class translation factor GTPase superfamily. Classic translation factor GTPase family. IF-2 subfamily.

It localises to the cytoplasm. Functionally, one of the essential components for the initiation of protein synthesis. Protects formylmethionyl-tRNA from spontaneous hydrolysis and promotes its binding to the 30S ribosomal subunits. Also involved in the hydrolysis of GTP during the formation of the 70S ribosomal complex. The chain is Translation initiation factor IF-2 from Lactobacillus johnsonii (strain CNCM I-12250 / La1 / NCC 533).